A 59-amino-acid polypeptide reads, in one-letter code: MRCLPVFVILLLLIASAPSVDAQLKTKDDVPLASFHDNAKGTQHKRIINWCCLIFYQCC.

The first 22 residues, 1 to 22 (MRCLPVFVILLLLIASAPSVDA), serve as a signal peptide directing secretion. Residues 23–44 (QLKTKDDVPLASFHDNAKGTQH) constitute a propeptide that is removed on maturation. 2 disulfides stabilise this stretch: cysteine 51/cysteine 58 and cysteine 52/cysteine 59.

Belongs to the conotoxin T superfamily. As to expression, expressed by the venom duct.

It is found in the secreted. Its function is as follows. Mu-conotoxins block voltage-gated sodium channels. This peptide inhibits the cardiac sodium channel hNav1.5/SCN5A (33% inhibition at 200 nM, 50% at 400 nM, and 55% at 600 nM). Does not interfere with the voltage-dependence of activation, but affects the voltage-dependence of inactivation of hNav1.5. In vivo, intracranial injection into 9-day-old mice causes transient symptoms, including extension of the body and clockwise and counter-clockwise turns, that last 3 to 4 minutes. Intracranial injection into 16-day-old mice, causes transient symptoms, including agitated breathing and occasional turning followed by scratching and grooming behavior, that last for 15-19 minutes. This chain is Mu-conotoxin SrVA, found in Conus spurius (Alphabet cone).